We begin with the raw amino-acid sequence, 122 residues long: Large ribosomal subunit protein uL29A (122 aa).

Residues 10–69 (QLGIKQIEERAAEIKADLAALRQKKNSGDVGANDIKTAKKNLARALTVRREKILEELVEA) adopt a coiled-coil conformation.

Belongs to the universal ribosomal protein uL29 family. As to quaternary structure, component of the large ribosomal subunit.

It localises to the cytoplasm. The polypeptide is Large ribosomal subunit protein uL29A (RPL35A) (Encephalitozoon cuniculi (strain GB-M1) (Microsporidian parasite)).